A 1124-amino-acid polypeptide reads, in one-letter code: Translation initiation factor IF-2 (1124 aa).

Over residues 32–41 the composition is skewed to low complexity; that stretch reads IAAKSHSSSI. Disordered stretches follow at residues 32 to 451 and 480 to 523; these read IAAK…QKVH and LARP…RAAR. Over residues 94–104 the composition is skewed to polar residues; that stretch reads ATSSSEISQVK. Over residues 134–173 the composition is skewed to low complexity; that stretch reads VNPTTTPTSSPPKTAARPVNAPISRPATPSRPSAPTPRSA. Residues 192–203 are compositionally biased toward polar residues; that stretch reads GQTSTSSKATTV. Residues 214–227 show a composition bias toward low complexity; sequence SRPQSPAAPGRSAP. 2 stretches are compositionally biased toward basic and acidic residues: residues 235-246 and 261-272; these read SDRKAPKPELVG and PEPEGQRPDKKR. Composition is skewed to low complexity over residues 274–283 and 411–422; these read GISPRPIGGP and RPAQAPAAGAPR. The span at 425-439 shows a compositional bias: basic and acidic residues; that stretch reads GRPDWDDSAKLEALR. 2 stretches are compositionally biased toward basic residues: residues 484-493 and 500-514; these read AKPKSQKKPA and LRKR…RQRR. The tr-type G domain occupies 615 to 787; sequence RRPPVVTVMG…ILLVTEVEDL (173 aa). The segment at 624–631 is G1; the sequence is GHVDHGKT. 624–631 contributes to the GTP binding site; sequence GHVDHGKT. Residues 649–653 form a G2 region; sequence GITQH. Positions 674 to 677 are G3; sequence DTPG. GTP contacts are provided by residues 674 to 678 and 728 to 731; these read DTPGH and NKTD. A G4 region spans residues 728-731; the sequence is NKTD. Residues 764-766 are G5; it reads SAI.

This sequence belongs to the TRAFAC class translation factor GTPase superfamily. Classic translation factor GTPase family. IF-2 subfamily.

The protein resides in the cytoplasm. One of the essential components for the initiation of protein synthesis. Protects formylmethionyl-tRNA from spontaneous hydrolysis and promotes its binding to the 30S ribosomal subunits. Also involved in the hydrolysis of GTP during the formation of the 70S ribosomal complex. This chain is Translation initiation factor IF-2, found in Prochlorococcus marinus (strain MIT 9303).